The primary structure comprises 385 residues: cAMP-dependent protein kinase, catalytic subunit-like (385 aa).

One can recognise a Protein kinase domain in the interval Leu63 to Phe317. Residues Ile69–Val77 and Lys92 each bind ATP. Residue Asp186 is the Proton acceptor of the active site. The AGC-kinase C-terminal domain maps to Glu318–Trp385.

The protein belongs to the protein kinase superfamily. Ser/Thr protein kinase family. cAMP subfamily.

It catalyses the reaction L-seryl-[protein] + ATP = O-phospho-L-seryl-[protein] + ADP + H(+). The enzyme catalyses L-threonyl-[protein] + ATP = O-phospho-L-threonyl-[protein] + ADP + H(+). This chain is cAMP-dependent protein kinase, catalytic subunit-like, found in Caenorhabditis briggsae.